Consider the following 171-residue polypeptide: MLP-like protein 31 (171 aa).

It belongs to the MLP family.

This Arabidopsis thaliana (Mouse-ear cress) protein is MLP-like protein 31 (MLP31).